The following is a 242-amino-acid chain: MTTVSMRDMLQAGVHFGHQTRYWNPKMKPFIFGARNGVHIINLEHTVPMFNEALAFISNVASKKGKVLFVGTKRAASEAIKESAISCEQFYVDHRWLGGMLTNWKTVRQSIKRLKDLESQSVDGTFDKLTKKEALMRTRELEKLEKSLGGIKNMGGLPDVIFVIGADHEHIAIKEANNLGIPVVAVVDTNSSPDGINYIVPGNDDAMRSIRLYTQSVAAAAKAGRGQDLAVQAEQDGFVEAE.

It belongs to the universal ribosomal protein uS2 family.

In Shewanella sediminis (strain HAW-EB3), this protein is Small ribosomal subunit protein uS2.